A 429-amino-acid chain; its full sequence is Na(+)/H(+) antiporter NhaA 1 (429 aa).

12 helical membrane passes run 32–52, 73–93, 111–131, 140–160, 170–190, 193–213, 219–239, 243–263, 284–304, 316–336, 349–369, and 383–403; these read ISGGLLLAATVLALGWANSPW, LSVQQWAADGLLAIFFFVAGL, VVPVAAAAGGVAVPAVLYSLL, GWAIPTATDIAFALSVLAVVG, FLLTLAVVDDLLAIVIIAVAY, ELSVVPLVAAVVPLAAFTLLV, AWWLLLPLAVLTWALVHASGV, VAGVLLAFAVPVLRSEGAGGP, VAVPVFAFCSAGVTVGGLGGL, VVVGLVVGKAIGIFTTTWLVA, WVDVAGLALLGGVGFTVSLLI, and HVKVGVLTASVTAALLATVVL.

The protein belongs to the NhaA Na(+)/H(+) (TC 2.A.33) antiporter family.

It is found in the cell membrane. It carries out the reaction Na(+)(in) + 2 H(+)(out) = Na(+)(out) + 2 H(+)(in). Its function is as follows. Na(+)/H(+) antiporter that extrudes sodium in exchange for external protons. The sequence is that of Na(+)/H(+) antiporter NhaA 1 from Frankia alni (strain DSM 45986 / CECT 9034 / ACN14a).